Consider the following 64-residue polypeptide: Translational regulator CsrA (64 aa).

Belongs to the CsrA/RsmA family. As to quaternary structure, homodimer; the beta-strands of each monomer intercalate to form a hydrophobic core, while the alpha-helices form wings that extend away from the core.

It localises to the cytoplasm. Its function is as follows. A key translational regulator that binds mRNA to regulate translation initiation and/or mRNA stability. Mediates global changes in gene expression, shifting from rapid growth to stress survival by linking envelope stress, the stringent response and the catabolite repression systems. Usually binds in the 5'-UTR; binding at or near the Shine-Dalgarno sequence prevents ribosome-binding, repressing translation, binding elsewhere in the 5'-UTR can activate translation and/or stabilize the mRNA. Its function is antagonized by small RNA(s). The chain is Translational regulator CsrA from Dichelobacter nodosus (strain VCS1703A).